The primary structure comprises 422 residues: Keratan-sulfate endo-1,4-beta-galactosidase (422 aa).

The N-terminal stretch at 1 to 46 (MRKTKFWLVLSLIATSLSIFACKKDSTATKNPIPEVSKAKASTKLL) is a signal peptide. In terms of domain architecture, GH16 spans 47–292 (NATTVATTDY…YVRVYKLPLF (246 aa)). Glu-171 functions as the Nucleophile in the catalytic mechanism. Glu-176 (proton donor) is an active-site residue. The CBM-cenC domain maps to 291 to 406 (LFSNGDFESG…NTTATVYFYK (116 aa)).

It belongs to the glycosyl hydrolase 16 family.

It is found in the secreted. The catalysed reaction is Endohydrolysis of (1-&gt;4)-beta-D-galactosidic linkages in keratan sulfate.. Its function is as follows. Hydrolyzes internal endo-beta-galactosyl linkages in keratan sulfate and in various neolacto-type glycosphingolipids, producing sulfated and non-sulfated disaccharides, and glucosylceramides respectivly. The protein is Keratan-sulfate endo-1,4-beta-galactosidase of Sphingobacterium multivorum.